The sequence spans 254 residues: Winged helix repair factor 1 (254 aa).

The Bipartite nuclear localization signal motif lies at 4–21; that stretch reads KRHHLIPETFGVKRRRKR. 3 winged helix domain regions span residues 32-104, 120-179, and 180-254; these read EPGS…GIIF, PYAG…LAVP, and GAGR…LPET.

Belongs to the STK19 family. Monomer in solution. Homodimer; when bound to DNA. Component of a transcription-coupled nucleotide excision repair (TC-NER) complex composed of STK19, ERCC6, ERCC8, DDA1, DDB1, ELOF1 and UVSSA which assembles and interacts with the multiprotein RNA polymerase II complex when it stalls at DNA lesions. As to expression, monocytes, hepatocytes, epithelial cells, T- and B-lymphocytes.

It is found in the nucleus. The protein localises to the cytoplasm. In terms of biological role, DNA-binding protein which is required for efficient transcription-coupled nucleotide excision repair (TC-NER). Acts as part of a TC-NER complex which assembles and interacts with RNA polymerase II (RNAPII) when it stalls at DNA lesions. TC-NER complex subunit UVSSA binds to the GTF2H1/p62 subunit of the TFIIH transcription factor complex, tethering TFIIH to the TC-NER complex. WHR1/STK19 then interacts with the XPD helicase subunit of TFIIH which guides TFIIH to DNA downstream of the stalled RNAPII, ensuring DNA repair. Directly interacts with RNAPII and also binds to downstream DNA. Promotes the timely removal of DNA damage-stalled RNAPII, allowing downstream NER factors to access DNA lesions. Required for monoubiquitination of UVSSA. Regulates repositioning and stabilization of UVSSA within the TC-NER complex. Stimulates ubiquitination of RNAPII complex member RBP1. Also binds to RNA and regulates the expression levels of many mRNAs. This chain is Winged helix repair factor 1, found in Homo sapiens (Human).